The sequence spans 407 residues: Arylacetamide deacetylase-like 4 family member 1 (407 aa).

Topologically, residues Met1–Leu4 are cytoplasmic. Residues Val5–Ile25 traverse the membrane as a helical; Signal-anchor for type II membrane protein segment. At Asp26–Leu407 the chain is on the lumenal side. Positions His119–Gly121 match the Involved in the stabilization of the negatively charged intermediate by the formation of the oxyanion hole motif. Asn168 is a glycosylation site (N-linked (GlcNAc...) asparagine). Catalysis depends on residues Ser193, Asp347, and His377.

The protein belongs to the 'GDXG' lipolytic enzyme family.

Its subcellular location is the membrane. The sequence is that of Arylacetamide deacetylase-like 4 family member 1 from Mus musculus (Mouse).